The primary structure comprises 317 residues: Phospholipase A1 1 (317 aa).

A signal peptide spans 1 to 7; that stretch reads RLIMFVG. Positions 8–17 are excised as a propeptide; it reads DPSSSNELDR. C21 and C104 are disulfide-bonded. Residue N25 is glycosylated (N-linked (GlcNAc...) asparagine). The Nucleophile role is filled by S154. Catalysis depends on D182, which acts as the Charge relay system. C193 and C198 are joined by a disulfide. N-linked (GlcNAc...) asparagine glycosylation occurs at N229. Cysteines 236 and 244 form a disulfide. H246 serves as the catalytic Charge relay system. 3 disulfide bridges follow: C261-C285, C262-C310, and C278-C283.

It belongs to the AB hydrolase superfamily. Lipase family. In terms of tissue distribution, expressed by the venom gland.

The protein localises to the secreted. It catalyses the reaction a 1,2-diacyl-sn-glycero-3-phosphocholine + H2O = a 2-acyl-sn-glycero-3-phosphocholine + a fatty acid + H(+). Catalyzes the hydrolysis of phosphatidylcholine with phospholipase A1 activity. May act as an allergen and induce hemolytic activity. The polypeptide is Phospholipase A1 1 (Dolichovespula maculata (Bald-faced hornet)).